A 295-amino-acid chain; its full sequence is GDSLYGSHSPTVTSQLGSLCMAPALLMASYQPGVKIEERPLNRMQQTGVKPSLGEDKPKVPGILPFSVEALMADRKPGRDRDLSSPTGSPLAGTSHSPRVGSIAAGETPNSPISLGNRYPVGAIMQLPEETLLKPESPERSSWIQSPSFSPSPTRRMSPPACPLRKHKTNRKPRTPFTTSQLLALERKFRQKQYLSIAERAEFSSSLNLTETQVKIWFQNRRAKAKRLQEAELEKLKMAAKPMLPPAFGISFPLGTPVPTASLYGTSNPFQRQALPMSPMGLYTAHLGYSMYHLS.

Disordered regions lie at residues 75–115 and 134–175; these read RKPG…PISL and KPES…KPRT. Positions 84 to 97 are enriched in polar residues; it reads SSPTGSPLAGTSHS. Low complexity predominate over residues 141 to 153; the sequence is SSWIQSPSFSPSP. The segment covering 164 to 174 has biased composition (basic residues); that stretch reads LRKHKTNRKPR. The homeobox DNA-binding region spans 170–229; the sequence is NRKPRTPFTTSQLLALERKFRQKQYLSIAERAEFSSSLNLTETQVKIWFQNRRAKAKRLQ.

The protein belongs to the Msh homeobox family.

Its subcellular location is the nucleus. This Xenopus laevis (African clawed frog) protein is Homeobox protein XHOX-7.1.